A 389-amino-acid polypeptide reads, in one-letter code: Oxytocin receptor (389 aa).

The interval 1-27 is disordered; it reads MEGELAANWSTEAVNSSAAPPGAEGNC. Residues 1 to 38 are Extracellular-facing; sequence MEGELAANWSTEAVNSSAAPPGAEGNCTAGPPRRNEAL. N-linked (GlcNAc...) asparagine glycans are attached at residues asparagine 8, asparagine 15, and asparagine 26. The span at 8–18 shows a compositional bias: polar residues; that stretch reads NWSTEAVNSSA. The chain crosses the membrane as a helical span at residues 39–63; it reads ARVEVAVLCLILFLALSGNACVLLA. The Cytoplasmic portion of the chain corresponds to 64 to 74; that stretch reads LRTTRHKHSRL. Residues 75-97 traverse the membrane as a helical segment; sequence FFFMKHLSIADLVVAVFQVLPQL. Residues 98-113 are Extracellular-facing; sequence LWDITFRFYGPDLLCR. A disulfide bond links cysteine 112 and cysteine 187. The helical transmembrane segment at 114–135 threads the bilayer; the sequence is LVKYLQVVGMFASTYLLLLMSL. Over 136-154 the chain is Cytoplasmic; sequence DRCLAICQPLRSLRRRTDR. Residues 155 to 175 traverse the membrane as a helical segment; it reads LAVLATWLGCLVASAPQVHIF. Topologically, residues 176-202 are extracellular; sequence SLREVADGVFDCWAVFIQPWGPKAYIT. The helical transmembrane segment at 203 to 225 threads the bilayer; that stretch reads WITLAVYIVPVIVLAACYGLISF. Residues 226–275 lie on the Cytoplasmic side of the membrane; sequence KIWQNLRLKTAAAAAAEAPEGAAAGDGGRMALARVSSVKLISKAKIRTVK. Residues 276-294 form a helical membrane-spanning segment; sequence MTFIIVLAFIVCWTPFFFV. Residues 295 to 309 are Extracellular-facing; that stretch reads QMWSVWDANAPKEAS. A helical membrane pass occupies residues 310-332; the sequence is AFIIVMLLASLNSCCNPWIYMLF. Over 333 to 389 the chain is Cytoplasmic; it reads TGHLFHELVQRFLCCSASYLKGNRLGETSTSKKSNSSSFVLSHRSSSQRSCSQPSTA. The disordered stretch occupies residues 358–389; it reads GETSTSKKSNSSSFVLSHRSSSQRSCSQPSTA. Over residues 360-389 the composition is skewed to low complexity; it reads TSTSKKSNSSSFVLSHRSSSQRSCSQPSTA. Residues serine 366 and serine 368 each carry the phosphoserine modification.

Belongs to the G-protein coupled receptor 1 family. Vasopressin/oxytocin receptor subfamily.

The protein localises to the cell membrane. Its function is as follows. Receptor for oxytocin. The activity of this receptor is mediated by G proteins which activate a phosphatidylinositol-calcium second messenger system. This is Oxytocin receptor (OXTR) from Macaca mulatta (Rhesus macaque).